A 213-amino-acid chain; its full sequence is 3-demethoxyubiquinol 3-hydroxylase (213 aa).

Fe cation-binding residues include E62, E92, H95, E144, E176, and H179.

It belongs to the COQ7 family. The cofactor is Fe cation.

The protein localises to the cell membrane. It catalyses the reaction a 5-methoxy-2-methyl-3-(all-trans-polyprenyl)benzene-1,4-diol + AH2 + O2 = a 3-demethylubiquinol + A + H2O. It functions in the pathway cofactor biosynthesis; ubiquinone biosynthesis. In terms of biological role, catalyzes the hydroxylation of 2-nonaprenyl-3-methyl-6-methoxy-1,4-benzoquinol during ubiquinone biosynthesis. This chain is 3-demethoxyubiquinol 3-hydroxylase, found in Legionella pneumophila (strain Corby).